Here is a 301-residue protein sequence, read N- to C-terminus: Ornithine carbamoyltransferase (301 aa).

Carbamoyl phosphate is bound by residues Arg107 and 134–137 (HPLQ). L-ornithine is bound by residues Asn165, Asp220, and 224 to 225 (SM). Residues 260–261 (CL) and Arg288 contribute to the carbamoyl phosphate site.

Belongs to the aspartate/ornithine carbamoyltransferase superfamily. OTCase family. In terms of assembly, homotrimer.

The protein localises to the cytoplasm. It catalyses the reaction carbamoyl phosphate + L-ornithine = L-citrulline + phosphate + H(+). The protein operates within amino-acid biosynthesis; L-arginine biosynthesis; L-arginine from L-ornithine and carbamoyl phosphate: step 1/3. With respect to regulation, inhibited by delta-N-phosphonoacetyl-L-ornithine. In terms of biological role, reversibly catalyzes the transfer of the carbamoyl group from carbamoyl phosphate (CP) to the N(epsilon) atom of ornithine (ORN) to produce L-citrulline, which is a substrate for argininosuccinate synthetase, the enzyme involved in the final step in arginine biosynthesis. The protein is Ornithine carbamoyltransferase of Thermus thermophilus (strain ATCC BAA-163 / DSM 7039 / HB27).